The primary structure comprises 260 residues: Indole-3-glycerol phosphate synthase (260 aa).

It belongs to the TrpC family.

The enzyme catalyses 1-(2-carboxyphenylamino)-1-deoxy-D-ribulose 5-phosphate + H(+) = (1S,2R)-1-C-(indol-3-yl)glycerol 3-phosphate + CO2 + H2O. It participates in amino-acid biosynthesis; L-tryptophan biosynthesis; L-tryptophan from chorismate: step 4/5. This chain is Indole-3-glycerol phosphate synthase, found in Leifsonia xyli subsp. xyli (strain CTCB07).